Consider the following 495-residue polypeptide: BUB3-interacting and GLEBS motif-containing protein ZNF207 (495 aa).

The interval 1–92 is microtubule-binding region; it reads MGRKKKKQLK…EGIPEKDMDE (92 aa). C2H2-type zinc fingers lie at residues 11–34 and 35–58; these read PWCW…KAKH and FKCH…MQVH. Positions 99–111 are enriched in basic and acidic residues; the sequence is QKTQESQKKKQQD. Disordered stretches follow at residues 99–161, 252–292, and 316–372; these read QKTQ…PGIP, PPAP…SNSE, and VGTD…ATLT. Positions 112–121 are enriched in acidic residues; the sequence is DSDEYDDDES. Residues 127–136 show a composition bias toward polar residues; it reads FQPQPVQPQQ. Residues 142 to 161 are compositionally biased toward pro residues; it reads MAQPGLPPVPGAPGMPPGIP. Composition is skewed to low complexity over residues 283 to 292 and 326 to 372; these read SSSTASSNSE and TPAA…ATLT. Residues 376–408 form a GLEBS region; that stretch reads ATSKLIHPDEDISLEERRAQLPKYQRNLPRPGQ. The disordered stretch occupies residues 462–495; it reads PYGQGPPMVPPYQGGPPRPPMGMRPPVMSQGGRY. Residues 464-484 are compositionally biased toward pro residues; that stretch reads GQGPPMVPPYQGGPPRPPMGM.

In terms of assembly, interacts (via GLEBS region) with BUB3. In terms of tissue distribution, in day-13 embryo, strongly expressed in the nervous system (brain, spinal cord and dorsal root ganglia), with strong to weak expression in other regions. Continues to be strongly expressed in the neonatal brain while expression is weak in the brain and spinal cord of adult.

The protein resides in the nucleus. The protein localises to the chromosome. It localises to the centromere. It is found in the kinetochore. Its subcellular location is the cytoplasm. The protein resides in the cytoskeleton. The protein localises to the spindle. Functionally, kinetochore- and microtubule-binding protein that plays a key role in spindle assembly. ZNF207/BuGZ is mainly composed of disordered low-complexity regions and undergoes phase transition or coacervation to form temperature-dependent liquid droplets. Coacervation promotes microtubule bundling and concentrates tubulin, promoting microtubule polymerization and assembly of spindle and spindle matrix by concentrating its building blocks. Also acts as a regulator of mitotic chromosome alignment by mediating the stability and kinetochore loading of BUB3. Mechanisms by which BUB3 is protected are unclear: according to a first report, ZNF207/BuGZ may act by blocking ubiquitination and proteasomal degradation of BUB3. According to another report, the stabilization is independent of the proteasome. The protein is BUB3-interacting and GLEBS motif-containing protein ZNF207 of Mus musculus (Mouse).